A 177-amino-acid polypeptide reads, in one-letter code: Disulfide bond formation protein B (177 aa).

The Cytoplasmic segment spans residues 1–14 (MLIFFKNLSMKRST). The chain crosses the membrane as a helical span at residues 15 to 31 (WILLFISALVLESTALY). Topologically, residues 32 to 49 (FQHGMGLNPCVMCIYERV) are periplasmic. C41 and C44 are disulfide-bonded. A helical membrane pass occupies residues 50-65 (AILGILFSGLIGCIAP). Over 66–72 (KWLVLRI) the chain is Cytoplasmic. A helical transmembrane segment spans residues 73–90 (LALLIGLGSAVKGLLLAI). The Periplasmic portion of the chain corresponds to 91–145 (KHLDYQINVYPWNQCAMVPDFPQTLPLDKWFPNIFMPSGSCSDITWSFLGFSMVQ). A disulfide bridge links C105 with C131. Residues 146-164 (WIIVIFACYFLFFIILSIS) traverse the membrane as a helical segment. Residues 165–177 (QFKKVRKNRMLFR) lie on the Cytoplasmic side of the membrane.

This sequence belongs to the DsbB family.

It is found in the cell inner membrane. Required for disulfide bond formation in some periplasmic proteins. Acts by oxidizing the DsbA protein. This Histophilus somni (strain 129Pt) (Haemophilus somnus) protein is Disulfide bond formation protein B.